The primary structure comprises 463 residues: Exodeoxyribonuclease 7 large subunit (463 aa).

The protein belongs to the XseA family. As to quaternary structure, heterooligomer composed of large and small subunits.

The protein localises to the cytoplasm. The catalysed reaction is Exonucleolytic cleavage in either 5'- to 3'- or 3'- to 5'-direction to yield nucleoside 5'-phosphates.. Its function is as follows. Bidirectionally degrades single-stranded DNA into large acid-insoluble oligonucleotides, which are then degraded further into small acid-soluble oligonucleotides. This chain is Exodeoxyribonuclease 7 large subunit, found in Bordetella bronchiseptica (strain ATCC BAA-588 / NCTC 13252 / RB50) (Alcaligenes bronchisepticus).